A 453-amino-acid polypeptide reads, in one-letter code: MGCSSSALNKAGDDNRLRSATEESESCFVQPKPRALGRESTLCGKVQKESLPPLDKLKISAVSTANGVQSLPEQPLAKEAADPPGATEETQPLQGLKGSEPPQPGGKDGAPGAEGKEEDVEAVTEAPPLKGSAETEPLGAEAENQPLITAGERDSTGAVEGTEDPQAAGEMTPLGTAERVPLEAAREPGSQEAGGKGEQSQLPETVPKETESPEILEGSQPVETAEPPQLQETVGENEQSQPLETVPKENASLEVSDGSQSVGAEGKKQLQETLGENEQSQLRETILGEHGGPEVSDGSQSVGAEEEKRLQEMLGKDEQPQLRETIPREHGGPEMSDASQSVETAVKADSLHKAPEGPGNMEKIQPERTVESMEHPAGILETGAKVEMARKIHTNEEDQHIEGETGETVETEMESEKVSEGAETKEEETGEAMDLSAATQIGMDGRVKGHSML.

Disordered regions lie at residues 1–38 (MGCS…ALGR), 66–377 (NGVQ…EHPA), and 394–453 (TNEE…HSML). Positions 11–21 (AGDDNRLRSAT) are enriched in basic and acidic residues. The residue at position 155 (serine 155) is a Phosphoserine. Composition is skewed to polar residues over residues 230-243 (LQET…SQPL) and 271-283 (QETL…SQLR). 3 stretches are compositionally biased toward basic and acidic residues: residues 305 to 332 (EEEK…EHGG), 364 to 374 (IQPERTVESME), and 394 to 403 (TNEEDQHIEG). The span at 404-413 (ETGETVETEM) shows a compositional bias: acidic residues. Over residues 414-424 (ESEKVSEGAET) the composition is skewed to basic and acidic residues.

This chain is Glutamate-rich protein 5 (ERICH5), found in Bos taurus (Bovine).